Reading from the N-terminus, the 120-residue chain is Ribosome-binding factor A (120 aa).

Belongs to the RbfA family. In terms of assembly, monomer. Binds 30S ribosomal subunits, but not 50S ribosomal subunits or 70S ribosomes.

It is found in the cytoplasm. One of several proteins that assist in the late maturation steps of the functional core of the 30S ribosomal subunit. Associates with free 30S ribosomal subunits (but not with 30S subunits that are part of 70S ribosomes or polysomes). Required for efficient processing of 16S rRNA. May interact with the 5'-terminal helix region of 16S rRNA. The chain is Ribosome-binding factor A from Chlamydia abortus (strain DSM 27085 / S26/3) (Chlamydophila abortus).